A 67-amino-acid polypeptide reads, in one-letter code: Cell division protein ZapB (67 aa).

Positions 3–59 (LELLSQLETKIQTALETIELLKLELDEEKEKAANLAEQNHQLKQELSSWNDKITGLV) form a coiled coil.

It belongs to the ZapB family. In terms of assembly, homodimer. The ends of the coiled-coil dimer bind to each other, forming polymers. Interacts with FtsZ.

The protein resides in the cytoplasm. Its function is as follows. Non-essential, abundant cell division factor that is required for proper Z-ring formation. It is recruited early to the divisome by direct interaction with FtsZ, stimulating Z-ring assembly and thereby promoting cell division earlier in the cell cycle. Its recruitment to the Z-ring requires functional FtsA or ZipA. This is Cell division protein ZapB from Shewanella amazonensis (strain ATCC BAA-1098 / SB2B).